The sequence spans 964 residues: Coatomer subunit beta (964 aa).

5 HEAT repeats span residues 129 to 166 (ELLE…NFDW), 238 to 275 (AERS…APTA), 314 to 351 (KVMQ…SRNI), 393 to 430 (DVAA…KFPA), and 466 to 506 (SQIL…QQGS). The span at 490–501 (RRLAGDQTEEQK) shows a compositional bias: basic and acidic residues. The segment at 490–530 (RRLAGDQTEEQKQQQGSAGGNAAGSAAEGSGSGNASNKVTS) is disordered. Positions 512–526 (AGSAAEGSGSGNASN) are enriched in low complexity.

Oligomeric complex that consists of at least the alpha, beta, beta', gamma, delta, epsilon and zeta subunits. During oogenesis and spermatogenesis, expressed in ovariole, germarium, testis tip and testis.

It is found in the cytoplasm. The protein localises to the golgi apparatus membrane. The protein resides in the cytoplasmic vesicle. Its subcellular location is the COPI-coated vesicle membrane. The coatomer is a cytosolic protein complex that binds to dilysine motifs and reversibly associates with Golgi non-clathrin-coated vesicles, which further mediate biosynthetic protein transport from the ER, via the Golgi up to the trans Golgi network. Coatomer complex is required for budding from Golgi membranes, and is essential for the retrograde Golgi-to-ER transport of dilysine-tagged proteins. Required for limiting lipid storage in lipid droplets. This Drosophila melanogaster (Fruit fly) protein is Coatomer subunit beta.